A 430-amino-acid polypeptide reads, in one-letter code: Adenylosuccinate synthetase (430 aa).

Residues 13 to 19 (GDEGKGK) and 41 to 43 (GHT) each bind GTP. The Proton acceptor role is filled by Asp14. Mg(2+) is bound by residues Asp14 and Gly41. Residues 14 to 17 (DEGK), 39 to 42 (NAGH), Thr130, Arg144, Gln225, Thr240, and Arg304 each bind IMP. Residue His42 is the Proton donor of the active site. Position 300 to 306 (300 to 306 (ATTGRAR)) interacts with substrate. GTP contacts are provided by residues Arg306, 332–334 (KLD), and 414–416 (STG).

This sequence belongs to the adenylosuccinate synthetase family. Homodimer. Requires Mg(2+) as cofactor.

It localises to the cytoplasm. It carries out the reaction IMP + L-aspartate + GTP = N(6)-(1,2-dicarboxyethyl)-AMP + GDP + phosphate + 2 H(+). It participates in purine metabolism; AMP biosynthesis via de novo pathway; AMP from IMP: step 1/2. Functionally, plays an important role in the de novo pathway of purine nucleotide biosynthesis. Catalyzes the first committed step in the biosynthesis of AMP from IMP. This Pseudomonas aeruginosa (strain LESB58) protein is Adenylosuccinate synthetase.